Reading from the N-terminus, the 284-residue chain is MDAIKKKMQAMKVDRENAQDLAEQMEQKLKDTETAKAKLEEEFNELQKKLTATENNYDTVNEQLQEANTKLENSEKQITQLESDVGGLQRRLTLLEEDYERSEEKLNSTTEKLEEASKAADESERNRKVLEGRSNSYEERIDELEKQLETAKNVATDADHKFDEAARKLAITEVDLERAETRLEAADAKVLELEEELTVVGANIKTLQVQNDQASQREDSYEETIRDLTKSLKDAENRATEAERQVVKLQKEVDRLEDELLAEKERYKAISDDLDQTFAEIAGY.

2 disordered regions span residues 1–27 and 99–131; these read MDAIKKKMQAMKVDRENAQDLAEQMEQ and YERSEEKLNSTTEKLEEASKAADESERNRKVLE. A coiled-coil region spans residues 1–273; sequence MDAIKKKMQA…KERYKAISDD (273 aa). Basic and acidic residues predominate over residues 102-131; it reads SEEKLNSTTEKLEEASKAADESERNRKVLE.

The protein belongs to the tropomyosin family. In terms of assembly, homodimer.

In terms of biological role, tropomyosin, in association with the troponin complex, plays a central role in the calcium dependent regulation of muscle contraction. The protein is Tropomyosin of Mimachlamys nobilis (Noble scallop).